The following is a 121-amino-acid chain: Small ribosomal subunit protein uS13 (121 aa).

A disordered region spans residues 93–121; the sequence is RGLPVRGQNTKNNARTRKGPRRTVANKKK. Residues 106-121 show a composition bias toward basic residues; it reads ARTRKGPRRTVANKKK.

It belongs to the universal ribosomal protein uS13 family. Part of the 30S ribosomal subunit. Forms a loose heterodimer with protein S19. Forms two bridges to the 50S subunit in the 70S ribosome.

In terms of biological role, located at the top of the head of the 30S subunit, it contacts several helices of the 16S rRNA. In the 70S ribosome it contacts the 23S rRNA (bridge B1a) and protein L5 of the 50S subunit (bridge B1b), connecting the 2 subunits; these bridges are implicated in subunit movement. Contacts the tRNAs in the A and P-sites. In Bacillus licheniformis (strain ATCC 14580 / DSM 13 / JCM 2505 / CCUG 7422 / NBRC 12200 / NCIMB 9375 / NCTC 10341 / NRRL NRS-1264 / Gibson 46), this protein is Small ribosomal subunit protein uS13.